The sequence spans 495 residues: Probable staphylococcal-like nuclease CAN4 (495 aa).

The N-myristoyl glycine moiety is linked to residue Gly-2. Cys-11 is lipidated: S-palmitoyl cysteine. Disordered stretches follow at residues 45 to 68 and 81 to 101; these read DLQV…RPAL and LQVP…PPRP. The span at 50 to 66 shows a compositional bias: pro residues; that stretch reads LSPPPPSTRQQQPPPRP. A TNase-like domain is found at 297 to 470; sequence KTLPVNAKCI…RDARQGLWAY (174 aa). A Ca(2+)-binding site is contributed by Asp-310. Arg-377 is an active-site residue. Asp-382 is a Ca(2+) binding site. Active-site residues include Glu-385 and Arg-419.

It belongs to the thermonuclease family. Ca(2+) serves as cofactor.

Its subcellular location is the cell membrane. In terms of biological role, enzyme that catalyzes the hydrolysis of both DNA and RNA at the 5' position of the phosphodiester bond. The protein is Probable staphylococcal-like nuclease CAN4 of Oryza sativa subsp. japonica (Rice).